The chain runs to 213 residues: Ribonuclease HII (213 aa).

The 196-residue stretch at 18–213 (GLHAGVDEVG…RPVKERLAKR (196 aa)) folds into the RNase H type-2 domain. The a divalent metal cation site is built by D24, E25, and D116.

The protein belongs to the RNase HII family. It depends on Mn(2+) as a cofactor. Mg(2+) serves as cofactor.

The protein resides in the cytoplasm. It catalyses the reaction Endonucleolytic cleavage to 5'-phosphomonoester.. Its function is as follows. Endonuclease that specifically degrades the RNA of RNA-DNA hybrids. In Shewanella woodyi (strain ATCC 51908 / MS32), this protein is Ribonuclease HII.